Reading from the N-terminus, the 137-residue chain is Large ribosomal subunit protein uL16 (137 aa).

This sequence belongs to the universal ribosomal protein uL16 family. Part of the 50S ribosomal subunit.

Its function is as follows. Binds 23S rRNA and is also seen to make contacts with the A and possibly P site tRNAs. This Methylococcus capsulatus (strain ATCC 33009 / NCIMB 11132 / Bath) protein is Large ribosomal subunit protein uL16.